We begin with the raw amino-acid sequence, 123 residues long: Large ribosomal subunit protein bL19 (123 aa).

The protein belongs to the bacterial ribosomal protein bL19 family.

In terms of biological role, this protein is located at the 30S-50S ribosomal subunit interface and may play a role in the structure and function of the aminoacyl-tRNA binding site. The polypeptide is Large ribosomal subunit protein bL19 (Ureaplasma parvum serovar 3 (strain ATCC 27815 / 27 / NCTC 11736)).